Here is a 63-residue protein sequence, read N- to C-terminus: Beta-defensin 6 (63 aa).

Residues 1–22 form the signal peptide; sequence MKIHYLLFAFILVMLSPLAAFS. Pyrrolidone carboxylic acid is present on Q23. Intrachain disulfides connect C31–C59, C38–C52, and C42–C60.

This sequence belongs to the beta-defensin family. In terms of tissue distribution, predominantly expressed in skeletal muscle, also expressed in esophagus, tongue, and trachea. Also expressed in lung when induced by lipopolysaccharide.

The protein localises to the secreted. Its function is as follows. Has potent antibacterial activity against E.coli (ATCC 25922). This is Beta-defensin 6 (Defb6) from Mus musculus (Mouse).